A 338-amino-acid polypeptide reads, in one-letter code: UDP-3-O-acylglucosamine N-acyltransferase (338 aa).

Residue His243 is the Proton acceptor of the active site.

Belongs to the transferase hexapeptide repeat family. LpxD subfamily. Homotrimer.

It catalyses the reaction a UDP-3-O-[(3R)-3-hydroxyacyl]-alpha-D-glucosamine + a (3R)-hydroxyacyl-[ACP] = a UDP-2-N,3-O-bis[(3R)-3-hydroxyacyl]-alpha-D-glucosamine + holo-[ACP] + H(+). The protein operates within bacterial outer membrane biogenesis; LPS lipid A biosynthesis. Its function is as follows. Catalyzes the N-acylation of UDP-3-O-acylglucosamine using 3-hydroxyacyl-ACP as the acyl donor. Is involved in the biosynthesis of lipid A, a phosphorylated glycolipid that anchors the lipopolysaccharide to the outer membrane of the cell. In Amoebophilus asiaticus (strain 5a2), this protein is UDP-3-O-acylglucosamine N-acyltransferase.